A 313-amino-acid polypeptide reads, in one-letter code: Foldase protein PrsA (313 aa).

The N-terminal stretch at 1-20 (MKKKLLAGAITLLSVATLAA) is a signal peptide. Residue Cys21 is the site of N-palmitoyl cysteine attachment. Cys21 carries the S-diacylglycerol cysteine lipid modification. The region spanning 143–241 (TPDVTAQIIR…SQYYIVKLTK (99 aa)) is the PpiC domain.

It belongs to the PrsA family.

It localises to the cell membrane. It catalyses the reaction [protein]-peptidylproline (omega=180) = [protein]-peptidylproline (omega=0). Its function is as follows. Plays a major role in protein secretion by helping the post-translocational extracellular folding of several secreted proteins. This chain is Foldase protein PrsA, found in Streptococcus pneumoniae serotype 4 (strain ATCC BAA-334 / TIGR4).